The sequence spans 92 residues: Small ribosomal subunit protein uS19 (92 aa).

This sequence belongs to the universal ribosomal protein uS19 family.

Functionally, protein S19 forms a complex with S13 that binds strongly to the 16S ribosomal RNA. The sequence is that of Small ribosomal subunit protein uS19 from Paracoccus denitrificans (strain Pd 1222).